The chain runs to 490 residues: MSRMAEQQLYIHGGYTSATSGRTFETINPANGNVLATVQAAGREDVDRAVKSAQQGQKIWAAMTAMERSRILRRAVDILRERNDELAKLETLDTGKAYSETSTVDIVTGADVLEYYAGLIPSLEGSQIPLRETSFVYTRREPLGVVAGIGAWNYPIQIALWKSAPALAAGNAMIFKPSEVTPLTALKLAEIYSEAGLPDGVFNVLPGVGAETGQYLTEHPGIAKVSFTGGVASGKKVMANSAASSLKEVTMELGGKSPLIVFDDADLDLAADIAMMANFFSSGQVCTNGTRVFVPAKCKAAFEQKILARVERIRAGDVFDPQTNFGPLVSFPHRDNVLRYIVKGKEEGARVLCGGDVLKGDGLDNGAWVAPTVFTDCSDEMTIVREEIFGPVMSILTYESEEEVIRRANDTDYGLAAGIVTADLNRAHRVIHQLEAGICWINTWGESPAEMPVGGYKHSGIGRENGVMTLQSYTQVKSIQVEMAKFQSIF.

K(+) contacts are provided by threonine 26, isoleucine 27, and aspartate 93. An NAD(+)-binding site is contributed by 150 to 152; that stretch reads GAW. The Charge relay system role is filled by lysine 162. 176–179 is an NAD(+) binding site; that stretch reads KPSE. Valine 180 is a binding site for K(+). 230–233 provides a ligand contact to NAD(+); that stretch reads GVAS. Position 246 (leucine 246) interacts with K(+). The Proton acceptor role is filled by glutamate 252. NAD(+)-binding residues include glycine 254, cysteine 286, and glutamate 387. Cysteine 286 (nucleophile) is an active-site residue. Cysteine 286 is subject to Cysteine sulfenic acid (-SOH). The K(+) site is built by lysine 457 and glycine 460. Glutamate 464 acts as the Charge relay system in catalysis.

It belongs to the aldehyde dehydrogenase family. Dimer of dimers. K(+) is required as a cofactor.

The enzyme catalyses betaine aldehyde + NAD(+) + H2O = glycine betaine + NADH + 2 H(+). Its pathway is amine and polyamine biosynthesis; betaine biosynthesis via choline pathway; betaine from betaine aldehyde: step 1/1. Involved in the biosynthesis of the osmoprotectant glycine betaine. Catalyzes the irreversible oxidation of betaine aldehyde to the corresponding acid. The polypeptide is Betaine aldehyde dehydrogenase (Escherichia coli O139:H28 (strain E24377A / ETEC)).